Here is a 359-residue protein sequence, read N- to C-terminus: N-acetylhexosamine 1-kinase (359 aa).

The region spanning 21 to 359 (VTGIEPYGDG…IVADIMEAAR (339 aa)) is the Protein kinase domain.

Belongs to the protein kinase superfamily. The cofactor is Mg(2+).

The enzyme catalyses N-acetyl-D-hexosamine + ATP = N-acetyl-alpha-D-hexosamine 1-phosphate + ADP + H(+). Functionally, phosphorylates both N-acetylglucosamine (GlcNAc) and N-acetylgalactosamine (GalNAc) at similar rates. Involved in the lacto-N-biose I/galacto-N-biose (LNB/GNB) degradation pathway, which is important for host intestinal colonization by bifidobacteria. Also accepts GTP and ITP as phosphate donors. In vitro, can phosphorylate several GlcNAc and GalNAc derivatives. The polypeptide is N-acetylhexosamine 1-kinase (nahK) (Bifidobacterium longum subsp. longum (strain ATCC 15707 / DSM 20219 / JCM 1217 / NCTC 11818 / E194b)).